The chain runs to 502 residues: Bone morphogenetic protein receptor type-1B (502 aa).

The N-terminal stretch at 1-13 (MLLRSAGKLNVGT) is a signal peptide. Residues 1–25 (MLLRSAGKLNVGTKKEDGESTAPTP) are disordered. Over 14-126 (KKEDGESTAP…DFVDGPIHHR (113 aa)) the chain is Extracellular. 5 disulfides stabilise this stretch: Cys-32/Cys-53, Cys-34/Cys-38, Cys-47/Cys-71, Cys-81/Cys-95, and Cys-96/Cys-102. The chain crosses the membrane as a helical span at residues 127–148 (ALLISVTVCSLLLVLIILFCYF). The Cytoplasmic portion of the chain corresponds to 149–502 (RYKRQETRPR…KMSESQDIKL (354 aa)). Positions 174-203 (ESLRDLIEQSQSSGSGSGLPLLVQRTIAKQ) constitute a GS domain. Positions 204–494 (IQMVKQIGKG…LRVKKTLAKM (291 aa)) constitute a Protein kinase domain. ATP-binding positions include 210–218 (IGKGRYGEV) and Lys-231. Asp-332 serves as the catalytic Proton acceptor.

It belongs to the protein kinase superfamily. TKL Ser/Thr protein kinase family. TGFB receptor subfamily. As to quaternary structure, interacts with high affinity with GDF5; positively regulates chondrocyte differentiation. Interacts with SCUBE3. Interacts with TSC22D1/TSC-22. Interacts with TGFBR3. It depends on Mg(2+) as a cofactor. Mn(2+) serves as cofactor. In terms of processing, autophosphorylated.

It localises to the cell membrane. The enzyme catalyses L-threonyl-[receptor-protein] + ATP = O-phospho-L-threonyl-[receptor-protein] + ADP + H(+). The catalysed reaction is L-seryl-[receptor-protein] + ATP = O-phospho-L-seryl-[receptor-protein] + ADP + H(+). In terms of biological role, on ligand binding, forms a receptor complex consisting of two type II and two type I transmembrane serine/threonine kinases. Type II receptors phosphorylate and activate type I receptors which autophosphorylate, then bind and activate SMAD transcriptional regulators. Receptor for BMP7/OP-1 and GDF5. Positively regulates chondrocyte differentiation through GDF5 interaction. The protein is Bone morphogenetic protein receptor type-1B (BMPR1B) of Homo sapiens (Human).